Here is a 288-residue protein sequence, read N- to C-terminus: Nucleotide-binding protein Veis_1053 (288 aa).

Residue 10–17 coordinates ATP; sequence GMSGSGKS. 59–62 is a GTP binding site; that stretch reads DVRS.

This sequence belongs to the RapZ-like family.

Functionally, displays ATPase and GTPase activities. The sequence is that of Nucleotide-binding protein Veis_1053 from Verminephrobacter eiseniae (strain EF01-2).